Consider the following 137-residue polypeptide: Large ribosomal subunit protein uL16 (137 aa).

Belongs to the universal ribosomal protein uL16 family. In terms of assembly, part of the 50S ribosomal subunit.

Its function is as follows. Binds 23S rRNA and is also seen to make contacts with the A and possibly P site tRNAs. The sequence is that of Large ribosomal subunit protein uL16 from Acinetobacter baumannii (strain SDF).